Consider the following 466-residue polypeptide: Cysteine--tRNA ligase (466 aa).

C28 provides a ligand contact to Zn(2+). Residues 30–40 (PTVYNFFHIGN) carry the 'HIGH' region motif. C208, H233, and E237 together coordinate Zn(2+). The 'KMSKS' region motif lies at 265 to 269 (KMSKS). K268 provides a ligand contact to ATP.

The protein belongs to the class-I aminoacyl-tRNA synthetase family. Monomer. The cofactor is Zn(2+).

It localises to the cytoplasm. The catalysed reaction is tRNA(Cys) + L-cysteine + ATP = L-cysteinyl-tRNA(Cys) + AMP + diphosphate. This chain is Cysteine--tRNA ligase, found in Clostridium perfringens (strain 13 / Type A).